Here is a 337-residue protein sequence, read N- to C-terminus: ATP-dependent 6-phosphofructokinase (337 aa).

Residue glycine 11 participates in ATP binding. ADP is bound at residue 21–25 (RAVVR). ATP is bound by residues 72 to 73 (RY) and 102 to 105 (GDGS). A Mg(2+)-binding site is contributed by aspartate 103. A substrate-binding site is contributed by 125–127 (TID). The Proton acceptor role is filled by aspartate 127. Arginine 154 contacts ADP. Substrate is bound by residues arginine 162 and 169–171 (MGR). Residues 185-187 (GAD) and 214-216 (KNH) contribute to the ADP site. Residues glutamate 223, arginine 245, and 251–254 (HILR) contribute to the substrate site.

This sequence belongs to the phosphofructokinase type A (PFKA) family. ATP-dependent PFK group I subfamily. Prokaryotic clade 'B1' sub-subfamily. In terms of assembly, homotetramer. Requires Mg(2+) as cofactor.

It localises to the cytoplasm. It carries out the reaction beta-D-fructose 6-phosphate + ATP = beta-D-fructose 1,6-bisphosphate + ADP + H(+). The protein operates within carbohydrate degradation; glycolysis; D-glyceraldehyde 3-phosphate and glycerone phosphate from D-glucose: step 3/4. Allosterically activated by ADP and other diphosphonucleosides, and allosterically inhibited by phosphoenolpyruvate. Catalyzes the phosphorylation of D-fructose 6-phosphate to fructose 1,6-bisphosphate by ATP, the first committing step of glycolysis. The polypeptide is ATP-dependent 6-phosphofructokinase (Streptococcus uberis (strain ATCC BAA-854 / 0140J)).